The sequence spans 174 residues: Cytochrome c oxidase subunit 5A, mitochondrial (174 aa).

The transit peptide at 1-29 (MASLTRAVTRLAIAGRQAVRTIATTTPVS) directs the protein to the mitochondrion.

The protein belongs to the cytochrome c oxidase subunit 5A family. Component of the cytochrome c oxidase (complex IV, CIV), a multisubunit enzyme composed of a catalytic core of 3 subunits and several supernumerary subunits. The complex exists as a monomer or a dimer and forms supercomplexes (SCs) in the inner mitochondrial membrane with ubiquinol-cytochrome c oxidoreductase (cytochrome b-c1 complex, complex III, CIII).

The protein resides in the mitochondrion inner membrane. It functions in the pathway energy metabolism; oxidative phosphorylation. In terms of biological role, component of the cytochrome c oxidase, the last enzyme in the mitochondrial electron transport chain which drives oxidative phosphorylation. The respiratory chain contains 3 multisubunit complexes succinate dehydrogenase (complex II, CII), ubiquinol-cytochrome c oxidoreductase (cytochrome b-c1 complex, complex III, CIII) and cytochrome c oxidase (complex IV, CIV), that cooperate to transfer electrons derived from NADH and succinate to molecular oxygen, creating an electrochemical gradient over the inner membrane that drives transmembrane transport and the ATP synthase. Cytochrome c oxidase is the component of the respiratory chain that catalyzes the reduction of oxygen to water. Electrons originating from reduced cytochrome c in the intermembrane space (IMS) are transferred via the dinuclear copper A center (CU(A)) of subunit 2 and heme A of subunit 1 to the active site in subunit 1, a binuclear center (BNC) formed by heme A3 and copper B (CU(B)). The BNC reduces molecular oxygen to 2 water molecules using 4 electrons from cytochrome c in the IMS and 4 protons from the mitochondrial matrix. This is Cytochrome c oxidase subunit 5A, mitochondrial from Caenorhabditis elegans.